The following is a 360-amino-acid chain: Lipid-A-disaccharide synthase (360 aa).

This sequence belongs to the LpxB family.

The catalysed reaction is a lipid X + a UDP-2-N,3-O-bis[(3R)-3-hydroxyacyl]-alpha-D-glucosamine = a lipid A disaccharide + UDP + H(+). The protein operates within bacterial outer membrane biogenesis; LPS lipid A biosynthesis. Its function is as follows. Condensation of UDP-2,3-diacylglucosamine and 2,3-diacylglucosamine-1-phosphate to form lipid A disaccharide, a precursor of lipid A, a phosphorylated glycolipid that anchors the lipopolysaccharide to the outer membrane of the cell. The sequence is that of Lipid-A-disaccharide synthase from Helicobacter acinonychis (strain Sheeba).